The following is a 121-amino-acid chain: Griffithsin (121 aa).

Residues S1 to Q120 form the Jacalin-type lectin domain.

Mixed specificity lectin with anti-HIV activity. Binds to HIV envelope glycoproteins, including exterior membrane glycoprotein gp120, and inhibits viral entry into cells. Binding to gp120 is dependent on gp120 being glycosylated, and is inhibited by mannose, glucose and N-acetylglucosamine. In Griffithsia sp. (strain Q66D336) (Red alga), this protein is Griffithsin.